Consider the following 528-residue polypeptide: Abrin-a (528 aa).

A Pyrrolidone carboxylic acid modification is found at Gln-1. Glu-164 is a catalytic residue. 3 cysteine pairs are disulfide-bonded: Cys-247–Cys-269, Cys-286–Cys-305, and Cys-329–Cys-346. The Ricin B-type lectin 1 domain occupies 273-400 (YEPTVRIGGR…YLMRQGWRTG (128 aa)). One copy of the 1-alpha repeat lies at 283 to 325 (DGMCVDVYDNGYHNGNRIIMWKCKDRLEENQLWTLKSDKTIRS). One copy of the 1-beta repeat lies at 326-366 (NGKCLTTYGYAPGSYVMIYDCTSAVAEATYWEIWDNGTIIN). 2 N-linked (GlcNAc...) asparagine glycosylation sites follow: Asn-361 and Asn-401. One copy of the 1-gamma repeat lies at 369–401 (SALVLSAESSSMGGTLTVQTNEYLMRQGWRTGN). Residues 403-527 (TSPFVTSISG…GKPNQIWLTL (125 aa)) form the Ricin B-type lectin 2 domain. The 2-alpha repeat unit spans residues 414–449 (SDLCMQAQGSNVWMADCDSNKKEQQWALYTDGSIRS). Cystine bridges form between Cys-417/Cys-430 and Cys-456/Cys-473. The 2-beta repeat unit spans residues 453-492 (TNNCLTSKDHKQGSTILLMGCSNGWASQRWVFKNDGSIYS). One copy of the 2-gamma repeat lies at 495-528 (DDMVMDVKGSDPSLKQIILWPYTGKPNQIWLTLF).

It in the N-terminal section; belongs to the ribosome-inactivating protein family. Type 2 RIP subfamily. In terms of assembly, disulfide-linked dimer of A and B chains.

The enzyme catalyses Endohydrolysis of the N-glycosidic bond at one specific adenosine on the 28S rRNA.. Functionally, the A chain is responsible for inhibiting protein synthesis through the catalytic inactivation of 60S ribosomal subunits by removing adenine from position 4,324 of 28S rRNA. Abrin-a is more toxic than ricin. Its function is as follows. The B chain is a galactose-specific lectin that facilitates the binding of abrin to the cell membrane that precedes endocytosis. In Abrus precatorius (Indian licorice), this protein is Abrin-a.